A 1510-amino-acid chain; its full sequence is Chromosome partition protein MukB (1510 aa).

75 to 82 lines the ATP pocket; it reads GGNGAGKS. Residues 346–706 adopt a coiled-coil conformation; it reads QHRLVDLSRE…LDEQISRLSQ (361 aa). The segment at 707–824 is flexible hinge; that stretch reads PDGSEDPRLN…EIPLFGCAAR (118 aa). Coiled-coil stretches lie at residues 825–1154 and 1248–1304; these read EKRL…AAKV and IDAI…LQNI.

This sequence belongs to the SMC family. MukB subfamily. In terms of assembly, homodimerization via its hinge domain. Binds to DNA via its C-terminal region. Interacts, and probably forms a ternary complex, with MukE and MukF via its C-terminal region. The complex formation is stimulated by calcium or magnesium. Interacts with tubulin-related protein FtsZ.

The protein resides in the cytoplasm. It is found in the nucleoid. Functionally, plays a central role in chromosome condensation, segregation and cell cycle progression. Functions as a homodimer, which is essential for chromosome partition. Involved in negative DNA supercoiling in vivo, and by this means organize and compact chromosomes. May achieve or facilitate chromosome segregation by condensation DNA from both sides of a centrally located replisome during cell division. This Haemophilus influenzae (strain ATCC 51907 / DSM 11121 / KW20 / Rd) protein is Chromosome partition protein MukB.